Reading from the N-terminus, the 1045-residue chain is Elongation factor 3 (1045 aa).

Residues I42, H44, and S83 each coordinate ADP. HEAT repeat units follow at residues 86-123 (PYVVALVPAILEQTGSKDKDVQSAANAALHAVVTAVNP), 125-162 (AVKAVLPHLTKSLSETNKWQEKVAVLSAISALVDQAKS), 166-203 (LRMTELIPVLSEAMWDTKKEVKNAATATMTKATETVEN), 171-209 (LIPVLSEAMWDTKKEVKNAATATMTKATETVENKDIERF), 205-241 (DIERFIPKLIECIANPSEVPETVHLLGATTFVAEVTP), 242-279 (ATLSIMTPLLSRGLAERETPIKRKSAVIIDNMCKLVED), and 285-323 (PFLNKLLPGLKNNFSVIADPEAREVTLRGLKTLRRVGAV). Positions 392 and 396 each coordinate ADP. ABC transporter domains lie at 426–641 (EEGE…YYEL) and 667–993 (VKVS…KKED). Positions 703, 922, 925, and 951 each coordinate ADP. The disordered stretch occupies residues 975–1045 (GHNWVSGQGS…AYVSDDDADF (71 aa)). Positions 1020-1031 (RKKKKERMKKKK) are enriched in basic residues.

It belongs to the ABC transporter superfamily. ABCF family. EF3 subfamily.

It is found in the cytoplasm. Its subcellular location is the cytosol. The enzyme catalyses ATP + H2O = ADP + phosphate + H(+). The protein operates within protein biosynthesis; polypeptide chain elongation. In terms of biological role, ribosome-dependent ATPase that functions in cytoplasmic translation elongation. Required for the ATP-dependent release of deacylated tRNA from the ribosomal E-site during protein biosynthesis. Stimulates the eEF1A-dependent binding of aminoacyl-tRNA to the ribosomal A-site, which has reduced affinity for tRNA as long as the E-site is occupied. Assists translation termination by stimulating the release of nascent protein from the ribosome by release factors. The sequence is that of Elongation factor 3 from Zygosaccharomyces rouxii (strain ATCC 2623 / CBS 732 / NBRC 1130 / NCYC 568 / NRRL Y-229).